The following is a 413-amino-acid chain: Probable short/branched chain specific acyl-CoA dehydrogenase (413 aa).

FAD contacts are provided by residues Phe-152–Ser-161 and Trp-186–Thr-188. Substrate is bound at residue Ser-161. Residues Tyr-208, Tyr-262, and Asn-270–Arg-273 each bind substrate. FAD-binding positions include Arg-298, Gln-309, and Ser-366 to Gly-370. The Proton acceptor role is filled by Glu-393. Position 395 to 397 (Thr-395 to Asn-397) interacts with FAD.

Belongs to the acyl-CoA dehydrogenase family. In terms of assembly, homotetramer. It depends on FAD as a cofactor.

It carries out the reaction 2-methylbutanoyl-CoA + oxidized [electron-transfer flavoprotein] + H(+) = (2E)-2-methylbut-2-enoyl-CoA + reduced [electron-transfer flavoprotein]. It functions in the pathway lipid metabolism; mitochondrial fatty acid beta-oxidation. Its pathway is amino-acid degradation; L-isoleucine degradation. Probable short and branched chain specific acyl-CoA dehydrogenase that catalyzes the removal of one hydrogen from C-2 and C-3 of the fatty acyl-CoA thioester, resulting in the formation of trans-2-enoyl-CoA. This Dictyostelium discoideum (Social amoeba) protein is Probable short/branched chain specific acyl-CoA dehydrogenase (acadsb).